The following is a 419-amino-acid chain: Prolyl hydroxylase EGLN2 (419 aa).

Composition is skewed to low complexity over residues 1–18 and 64–73; these read MDSPCQPQALNQALPQLP and TTATATTTTA. Disordered stretches follow at residues 1-89 and 108-181; these read MDSP…GELW and AAQG…REEV. The Bipartite nuclear localization signal signature appears at 89 to 134; the sequence is WPLQSEGAAALVTKECQRLAAQGARPEAPKRKWAKDGGDAPSPSKR. The span at 115-126 shows a compositional bias: basic and acidic residues; sequence EAPKRKWAKDGG. Ser130 is subject to Phosphoserine. Residues 154–174 show a composition bias toward low complexity; the sequence is SGASNSSSSSSNTTSSSGEAS. The segment at 237–247 is beta(2)beta(3) 'finger-like' loop; sequence VSQRAIPPRSI. The 99-residue stretch at 290-388 folds into the Fe2OG dioxygenase domain; sequence GRTKAMVACY…RYAITVWYFD (99 aa). Residues His309, Asp311, and His370 each coordinate Fe cation. Position 379 (Arg379) interacts with 2-oxoglutarate.

In terms of assembly, interacts with E3 ligase SIAH2. Interacts with LIMD1, WTIP and AJUBA. It depends on Fe(2+) as a cofactor. L-ascorbate is required as a cofactor. Ubiquitinated by SIAH1 and/or SIAH2 in response to the unfolded protein response (UPR), leading to its degradation. In terms of tissue distribution, highly expressed in testis, expression was also detected in the heart brain, liver kidney and lung. Expression was lowest in spleen and skeletal muscle. Constitutively expressed during differentiation of C2C12 skeletal myocytes.

The protein localises to the nucleus. The catalysed reaction is L-prolyl-[protein] + 2-oxoglutarate + O2 = trans-4-hydroxy-L-prolyl-[protein] + succinate + CO2. It catalyses the reaction L-prolyl-[hypoxia-inducible factor alpha subunit] + 2-oxoglutarate + O2 = trans-4-hydroxy-L-prolyl-[hypoxia-inducible factor alpha subunit] + succinate + CO2. Its function is as follows. Prolyl hydroxylase that mediates hydroxylation of proline residues in target proteins, such as ATF4, IKBKB, CEP192 and HIF1A. Target proteins are preferentially recognized via a LXXLAP motif. Cellular oxygen sensor that catalyzes, under normoxic conditions, the post-translational formation of 4-hydroxyproline in hypoxia-inducible factor (HIF) alpha proteins. Hydroxylates a specific proline found in each of the oxygen-dependent degradation (ODD) domains (N-terminal, NODD, and C-terminal, CODD) of HIF1A. Also hydroxylates HIF2A. Has a preference for the CODD site for both HIF1A and HIF2A. Hydroxylated HIFs are then targeted for proteasomal degradation via the von Hippel-Lindau ubiquitination complex. Under hypoxic conditions, the hydroxylation reaction is attenuated allowing HIFs to escape degradation resulting in their translocation to the nucleus, heterodimerization with HIF1B, and increased expression of hypoxy-inducible genes. EGLN2 is involved in regulating hypoxia tolerance and apoptosis in cardiac and skeletal muscle. Also regulates susceptibility to normoxic oxidative neuronal death. Links oxygen sensing to cell cycle and primary cilia formation by hydroxylating the critical centrosome component CEP192 which promotes its ubiquitination and subsequent proteasomal degradation. Hydroxylates IKBKB, mediating NF-kappa-B activation in hypoxic conditions. Also mediates hydroxylation of ATF4, leading to decreased protein stability of ATF4. The sequence is that of Prolyl hydroxylase EGLN2 from Mus musculus (Mouse).